We begin with the raw amino-acid sequence, 128 residues long: uncharacterized protein (128 aa).

A VOC domain is found at 1–126 (MHHIELYVSD…DRIKVELVAP (126 aa)).

This is an uncharacterized protein from Bacillus subtilis (strain 168).